A 418-amino-acid polypeptide reads, in one-letter code: MKKVYFKTFGCRTNLFDTQVMGENLKDFSATLEEQEADIIIINSCTVTNGTDSAVRSYARKMARLDKEVLFTGCGVKTQGKELFEKGLLKGVFGHDNKEKINALLQEKKRFFIDDNLENKHLDTTMVSEFVGKTRAFIKIQEGCDFDCNYCIIPSVRGRARSFEERKILEQVGLLCSKGVQEVVLTGTNVGSYGKDRGSNIARLIKKLSQITGLKRIRIGSLEPNQINDEFLELLEEDFLEKHLHIALQHSHDFMLERMNRRNRTKSDRELLEIIASKNFAIGTDFIVGHPGESESVFEKAFKNLESLPLTHIHPFIYSKRKDTPSSLMRDSVSLEDSKKRLNAIKDLIFHKNKAFRQLQLKLNTPLKALVEAQKDGEFKALDQFFNPIKIKSDKPLRASFLEIKEYEIKERENHAVF.

The region spanning 2 to 110 (KKVYFKTFGC…INALLQEKKR (109 aa)) is the MTTase N-terminal domain. 6 residues coordinate [4Fe-4S] cluster: cysteine 11, cysteine 45, cysteine 74, cysteine 144, cysteine 148, and cysteine 151. In terms of domain architecture, Radical SAM core spans 130–355 (FVGKTRAFIK…KDLIFHKNKA (226 aa)).

This sequence belongs to the methylthiotransferase family. [4Fe-4S] cluster serves as cofactor.

The polypeptide is Putative methylthiotransferase jhp_0270 (Helicobacter pylori (strain J99 / ATCC 700824) (Campylobacter pylori J99)).